Reading from the N-terminus, the 223-residue chain is uncharacterized protein (223 aa).

Residues 33 to 67 form a C4-type zinc finger; that stretch reads CPICGGKGTLKAIQFIHRIPYFGEVMESTVVCERC.

This sequence belongs to the ZPR1 family.

This is an uncharacterized protein from Pyrococcus horikoshii (strain ATCC 700860 / DSM 12428 / JCM 9974 / NBRC 100139 / OT-3).